The sequence spans 94 residues: Exodeoxyribonuclease 7 small subunit (94 aa).

This sequence belongs to the XseB family. As to quaternary structure, heterooligomer composed of large and small subunits.

Its subcellular location is the cytoplasm. The enzyme catalyses Exonucleolytic cleavage in either 5'- to 3'- or 3'- to 5'-direction to yield nucleoside 5'-phosphates.. Its function is as follows. Bidirectionally degrades single-stranded DNA into large acid-insoluble oligonucleotides, which are then degraded further into small acid-soluble oligonucleotides. The sequence is that of Exodeoxyribonuclease 7 small subunit from Trichormus variabilis (strain ATCC 29413 / PCC 7937) (Anabaena variabilis).